A 382-amino-acid chain; its full sequence is Lipoyl synthase, mitochondrial (382 aa).

The N-terminal 30 residues, 1-30 (MHGRRHLAASLARALTYAPSRSISSTPSLL), are a transit peptide targeting the mitochondrion. Residues 25-34 (STPSLLQTLD) show a composition bias toward polar residues. The segment at 25-47 (STPSLLQTLDPSTPSPAAAPPTA) is disordered. [4Fe-4S] cluster is bound by residues Cys-112, Cys-117, Cys-123, Cys-143, Cys-147, Cys-150, and Ser-359. Residues 128 to 348 (ETGTATATIM…RSLGVDMGFR (221 aa)) form the Radical SAM core domain.

It belongs to the radical SAM superfamily. Lipoyl synthase family. It depends on [4Fe-4S] cluster as a cofactor.

It localises to the mitochondrion. The enzyme catalyses [[Fe-S] cluster scaffold protein carrying a second [4Fe-4S](2+) cluster] + N(6)-octanoyl-L-lysyl-[protein] + 2 oxidized [2Fe-2S]-[ferredoxin] + 2 S-adenosyl-L-methionine + 4 H(+) = [[Fe-S] cluster scaffold protein] + N(6)-[(R)-dihydrolipoyl]-L-lysyl-[protein] + 4 Fe(3+) + 2 hydrogen sulfide + 2 5'-deoxyadenosine + 2 L-methionine + 2 reduced [2Fe-2S]-[ferredoxin]. It functions in the pathway protein modification; protein lipoylation via endogenous pathway; protein N(6)-(lipoyl)lysine from octanoyl-[acyl-carrier-protein]: step 2/2. In terms of biological role, catalyzes the radical-mediated insertion of two sulfur atoms into the C-6 and C-8 positions of the octanoyl moiety bound to the lipoyl domains of lipoate-dependent enzymes, thereby converting the octanoylated domains into lipoylated derivatives. This is Lipoyl synthase, mitochondrial from Oryza sativa subsp. indica (Rice).